Here is a 76-residue protein sequence, read N- to C-terminus: Acyl carrier protein (76 aa).

The Carrier domain maps to 2–76 (KDNFTRLQSI…QDVLNYLERN (75 aa)). O-(pantetheine 4'-phosphoryl)serine is present on Ser-37.

This sequence belongs to the acyl carrier protein (ACP) family. 4'-phosphopantetheine is transferred from CoA to a specific serine of apo-ACP by AcpS. This modification is essential for activity because fatty acids are bound in thioester linkage to the sulfhydryl of the prosthetic group.

The protein localises to the plastid. The protein resides in the chloroplast. It participates in lipid metabolism; fatty acid biosynthesis. Carrier of the growing fatty acid chain in fatty acid biosynthesis. The protein is Acyl carrier protein of Phaeodactylum tricornutum (strain CCAP 1055/1).